The chain runs to 324 residues: uncharacterized protein (324 aa).

This is an uncharacterized protein from Borreliella burgdorferi (strain ATCC 35210 / DSM 4680 / CIP 102532 / B31) (Borrelia burgdorferi).